The following is a 540-amino-acid chain: Phosphoenolpyruvate carboxykinase (ATP) (540 aa).

Substrate is bound at residue Arg65. An N6-acetyllysine modification is found at Lys87. Positions 207 and 213 each coordinate substrate. ATP contacts are provided by residues Lys213, His232, and 248 to 256 (GLSGTGKTT). Mn(2+) is bound by residues Lys213 and His232. Asp269 is a binding site for Mn(2+). ATP contacts are provided by residues Glu297, Arg333, 449-450 (RI), and Thr455. Arg333 lines the substrate pocket. Lys523 is subject to N6-acetyllysine.

It belongs to the phosphoenolpyruvate carboxykinase (ATP) family. In terms of assembly, monomer. The cofactor is Mn(2+).

It is found in the cytoplasm. It carries out the reaction oxaloacetate + ATP = phosphoenolpyruvate + ADP + CO2. It participates in carbohydrate biosynthesis; gluconeogenesis. Involved in the gluconeogenesis. Catalyzes the conversion of oxaloacetate (OAA) to phosphoenolpyruvate (PEP) through direct phosphoryl transfer between the nucleoside triphosphate and OAA. The sequence is that of Phosphoenolpyruvate carboxykinase (ATP) from Escherichia coli O6:K15:H31 (strain 536 / UPEC).